The sequence spans 1017 residues: Probable calcium-transporting ATPase 8, plasma membrane-type (1017 aa).

Residues 1-153 are Cytoplasmic-facing; the sequence is MEKLDRYLQE…FVWDAFQDMT (153 aa). 2 helical membrane-spanning segments follow: residues 154-174 and 177-197; these read LIILMVCALLSVAVGLATEGW and GMYDGLGIILSIFLVVMVTAV. The Cytoplasmic segment spans residues 198–228; sequence SDYKQSLQFKELDNEKKKIFIHVTRDGRRQK. A run of 2 helical transmembrane segments spans residues 229–249 and 331–351; these read ISIYDLVVGDIVHLSIGDQVP and VATVIGKIGLVFAILTFLVLL. At 352 to 384 the chain is on the cytoplasmic side; sequence VRFLIDKGMTVGLLKWYSTDALTIVNYFATAVT. Residues 385–405 form a helical membrane-spanning segment; sequence IIVVAVPEGLPLAVTLSLAFA. Residue Asp-434 is the 4-aspartylphosphate intermediate of the active site. Residues Asp-736 and Asp-740 each coordinate Mg(2+). A helical transmembrane segment spans residues 803-823; the sequence is IVALVINFVSACITGSAPLTA. Residues 824–825 lie on the Cytoplasmic side of the membrane; that stretch reads VQ. 2 consecutive transmembrane segments (helical) span residues 826–846 and 875–895; these read LLWVNMIMDTLGALALATEPP and SLYQLFVLGALMFGGESLLNI. Residues 896–938 are Cytoplasmic-facing; sequence KGADSKSIINTLIFNSFVFCQVFNEINSREMQKINVFRGIISN. A run of 2 helical transmembrane segments spans residues 939 to 959 and 973 to 993; these read WIFIAVIAATVAFQVVIIEFL and WLLSVGLGSISLIVGVILKCI. The Cytoplasmic portion of the chain corresponds to 994-1017; sequence PVGSGETSATPNGYRPLANGPDDI.

The protein belongs to the cation transport ATPase (P-type) (TC 3.A.3) family. Type IIB subfamily.

The protein localises to the membrane. It catalyses the reaction Ca(2+)(in) + ATP + H2O = Ca(2+)(out) + ADP + phosphate + H(+). Activated by calmodulin. In terms of biological role, this magnesium-dependent enzyme catalyzes the hydrolysis of ATP coupled with the translocation of calcium from the cytosol out of the cell, into the endoplasmic reticulum, or into organelles. The sequence is that of Probable calcium-transporting ATPase 8, plasma membrane-type from Oryza sativa subsp. japonica (Rice).